Here is a 291-residue protein sequence, read N- to C-terminus: Elongation factor Ts (291 aa).

Positions 79–82 are involved in Mg(2+) ion dislocation from EF-Tu; the sequence is TDFV.

The protein belongs to the EF-Ts family.

Its subcellular location is the cytoplasm. Associates with the EF-Tu.GDP complex and induces the exchange of GDP to GTP. It remains bound to the aminoacyl-tRNA.EF-Tu.GTP complex up to the GTP hydrolysis stage on the ribosome. The sequence is that of Elongation factor Ts from Jannaschia sp. (strain CCS1).